The chain runs to 444 residues: C4-dicarboxylate transport protein (444 aa).

The next 9 helical transmembrane spans lie at 18 to 40, 53 to 75, 90 to 112, 142 to 159, 163 to 180, 201 to 222, 232 to 254, 327 to 349, and 364 to 386; these read FYSH…GHFY, AFIK…TGIA, AMLY…ANVV, IVGF…GAFA, ILQV…LAMV, LVAI…FTIG, LAML…LGAV, LFIA…LLVA, and FITL…ALIL.

Belongs to the dicarboxylate/amino acid:cation symporter (DAACS) (TC 2.A.23) family.

The protein localises to the cell inner membrane. In terms of biological role, responsible for the transport of dicarboxylates such as succinate, fumarate, and malate from the periplasm across the inner membrane. This transport system plays an important role in the energy supply of rhizobium-legume symbionts. This is C4-dicarboxylate transport protein (dctA) from Rhizobium leguminosarum.